The chain runs to 309 residues: Probable RuBisCO transcriptional regulator (309 aa).

An HTH lysR-type domain is found at 5 to 62; sequence FTLQQLRILKAIATEKSFTRAAEVLFVSQPSLSKQIKTLESRLNISLLNRENNIVSLT. Positions 22-41 form a DNA-binding region, H-T-H motif; it reads FTRAAEVLFVSQPSLSKQIK.

It belongs to the LysR transcriptional regulatory family.

Its subcellular location is the plastid. The protein localises to the chloroplast. In terms of biological role, trans-acting transcriptional regulator of RuBisCO genes (rbcL and rbcS) expression. The chain is Probable RuBisCO transcriptional regulator (rbcR) from Trieres chinensis (Marine centric diatom).